Consider the following 107-residue polypeptide: Glutaredoxin 4 (107 aa).

The Glutaredoxin domain maps to 4–106 (LDKIKKQISE…TLLAEVAAKH (103 aa)). Glutathione is bound at residue Lys-21. Cys-29 is a [2Fe-2S] cluster binding site. Glutathione contacts are provided by residues Arg-58, Phe-70, and 83–84 (CD).

It belongs to the glutaredoxin family. Monothiol subfamily. Homodimer.

The protein resides in the cytoplasm. In terms of biological role, monothiol glutaredoxin involved in the biogenesis of iron-sulfur clusters. In Haemophilus influenzae (strain ATCC 51907 / DSM 11121 / KW20 / Rd), this protein is Glutaredoxin 4 (grxD).